The primary structure comprises 337 residues: MSRQAKDDFLRHYTVSDPRTHPKGYTEYKVTAQFISKKDPEDIKEVVVWKRYSDFRKLHGDLAYTHRNLFRRLEEFPAFPRAQVFGRFEASVIEERRKGAEDLLRFTVPIPALNNSPQLKEFFRGGEVTRPSEVSRDLRILPPPLIPTPPPDEARLLQPLPAERRGQEELEVPVDPLPSSPAQEALDLLFSCDSTEEASSSLARGPLSEAELALFDPYSKEESTGPSPTHTGELAAIEVESKRLDQEPWEPGGQEEEEAEDGEPAPAYLGQATELITQALRNEKAGAYAAALQGYQDGVHILLQGVSGDPSPARREGVKKKAAEYLKRAEMLHTHLP.

The region spanning 1–130 is the PX domain; the sequence is MSRQAKDDFL…EFFRGGEVTR (130 aa). A 1,2-diacyl-sn-glycero-3-phospho-(1D-myo-inositol-3-phosphate) is bound by residues Arg51, Ser53, Arg87, and Arg96. Position 105 is an omega-N-methylarginine (Arg105). A disordered region spans residues 133 to 156; it reads EVSRDLRILPPPLIPTPPPDEARL. Residues 141 to 151 are compositionally biased toward pro residues; it reads LPPPLIPTPPP. Phosphoserine occurs at positions 201 and 227. The segment at 244–270 is disordered; it reads LDQEPWEPGGQEEEEAEDGEPAPAYLG. A compositionally biased stretch (acidic residues) spans 253–263; it reads GQEEEEAEDGE. One can recognise an MIT domain in the interval 265-337; the sequence is APAYLGQATE…RAEMLHTHLP (73 aa).

It belongs to the sorting nexin family. In terms of assembly, homodimer. Interacts with SNX1, SNX2 and SNX4.

The protein localises to the cytoplasm. It is found in the membrane. It localises to the cytoplasmic vesicle membrane. In terms of biological role, may be involved in several stages of intracellular trafficking. Overexpression of SNX15 disrupts the normal trafficking of proteins from the plasma membrane to recycling endosomes or the TGN. This Mus musculus (Mouse) protein is Sorting nexin-15 (Snx15).